Consider the following 313-residue polypeptide: MNVGIKGFGAYAPEKIIDNAYFEQFLDTSDEWISKMTGIKERHWADDDQDTSDLAYEASVKAIADAGIQPEDIDMIIVATATGDMPFPTVANMLQERLGTGKVASMDQLAACSGFMYSMITAKQYVQSGDYHNILVVGADKLSKITDLTDRSTAVLFGDGAGAVIIGEVSEGRGIISYEMGSDGTGGKHLYLDKDTGKLKMNGREVFKFAVRIMGDASTRVVEKANLTSDDIDLFIPHQANIRIMESARERLGISKDKMSVSVNKYGNTSAASIPLSIDQELKNGKLKDDDTIVLVGFGGGLTWGAMTIKWGK.

Active-site residues include Cys112 and His238. Positions 239 to 243 (QANIR) are ACP-binding. Asn268 is an active-site residue.

The protein belongs to the thiolase-like superfamily. FabH family. In terms of assembly, homodimer.

The protein localises to the cytoplasm. It carries out the reaction malonyl-[ACP] + acetyl-CoA + H(+) = 3-oxobutanoyl-[ACP] + CO2 + CoA. It functions in the pathway lipid metabolism; fatty acid biosynthesis. In terms of biological role, catalyzes the condensation reaction of fatty acid synthesis by the addition to an acyl acceptor of two carbons from malonyl-ACP. Catalyzes the first condensation reaction which initiates fatty acid synthesis and may therefore play a role in governing the total rate of fatty acid production. Possesses both acetoacetyl-ACP synthase and acetyl transacylase activities. Its substrate specificity determines the biosynthesis of branched-chain and/or straight-chain of fatty acids. This is Beta-ketoacyl-[acyl-carrier-protein] synthase III from Staphylococcus aureus (strain bovine RF122 / ET3-1).